The chain runs to 580 residues: Putative Xaa-Pro dipeptidyl-peptidase (580 aa).

Active-site charge relay system residues include Ser-207, Asp-319, and His-350.

Belongs to the peptidase S15 family.

It carries out the reaction Hydrolyzes Xaa-Pro-|- bonds to release unblocked, N-terminal dipeptides from substrates including Ala-Pro-|-p-nitroanilide and (sequentially) Tyr-Pro-|-Phe-Pro-|-Gly-Pro-|-Ile.. The sequence is that of Putative Xaa-Pro dipeptidyl-peptidase from Bacillus cereus (strain ATCC 14579 / DSM 31 / CCUG 7414 / JCM 2152 / NBRC 15305 / NCIMB 9373 / NCTC 2599 / NRRL B-3711).